Consider the following 180-residue polypeptide: MVNALKEKYVNEVRPALISKFDYTSLMQAPKLEKIVLNMGVGDAVTNSNNLDEAVSELRLIAGQQPVVTKAKKSIAGFRLREGMSIGSKVTLRGTRMYDFLDKLINVALPRVRDFHGTSTKSFDGRGNYTLGIKEQLIFPEINYDDVNRVRGLDIVIVTTAKTDEEGLELLSQLGMPFAK.

This sequence belongs to the universal ribosomal protein uL5 family. As to quaternary structure, part of the 50S ribosomal subunit; part of the 5S rRNA/L5/L18/L25 subcomplex. Contacts the 5S rRNA and the P site tRNA. Forms a bridge to the 30S subunit in the 70S ribosome.

In terms of biological role, this is one of the proteins that bind and probably mediate the attachment of the 5S RNA into the large ribosomal subunit, where it forms part of the central protuberance. In the 70S ribosome it contacts protein S13 of the 30S subunit (bridge B1b), connecting the 2 subunits; this bridge is implicated in subunit movement. Contacts the P site tRNA; the 5S rRNA and some of its associated proteins might help stabilize positioning of ribosome-bound tRNAs. This is Large ribosomal subunit protein uL5 from Oenococcus oeni (strain ATCC BAA-331 / PSU-1).